Reading from the N-terminus, the 113-residue chain is MAQHRKLGLPSDHRRAMLRNLVTSFLKHGKIQTTVTRAKEARSLAEKMITLAKRGDLHARRQVLSFVTEEEVVKNLFTNIAPKYAERNGGYTRMYKIGPRRGDGAELVILELV.

This sequence belongs to the bacterial ribosomal protein bL17 family. Part of the 50S ribosomal subunit. Contacts protein L32.

In Clostridium kluyveri (strain NBRC 12016), this protein is Large ribosomal subunit protein bL17.